The sequence spans 352 residues: Probable dual-specificity RNA methyltransferase RlmN (352 aa).

The Proton acceptor role is filled by Glu93. Positions 99–333 constitute a Radical SAM core domain; sequence FNYGYSVCVT…IRLERGSSID (235 aa). Cysteines 106 and 336 form a disulfide. The [4Fe-4S] cluster site is built by Cys113, Cys117, and Cys120. S-adenosyl-L-methionine contacts are provided by residues 164-165, Ser196, and Asn295; that span reads GE. Cys336 functions as the S-methylcysteine intermediate in the catalytic mechanism.

The protein belongs to the radical SAM superfamily. RlmN family. Requires [4Fe-4S] cluster as cofactor.

It is found in the cytoplasm. It catalyses the reaction adenosine(2503) in 23S rRNA + 2 reduced [2Fe-2S]-[ferredoxin] + 2 S-adenosyl-L-methionine = 2-methyladenosine(2503) in 23S rRNA + 5'-deoxyadenosine + L-methionine + 2 oxidized [2Fe-2S]-[ferredoxin] + S-adenosyl-L-homocysteine. The enzyme catalyses adenosine(37) in tRNA + 2 reduced [2Fe-2S]-[ferredoxin] + 2 S-adenosyl-L-methionine = 2-methyladenosine(37) in tRNA + 5'-deoxyadenosine + L-methionine + 2 oxidized [2Fe-2S]-[ferredoxin] + S-adenosyl-L-homocysteine. Specifically methylates position 2 of adenine 2503 in 23S rRNA and position 2 of adenine 37 in tRNAs. The sequence is that of Probable dual-specificity RNA methyltransferase RlmN from Malacoplasma penetrans (strain HF-2) (Mycoplasma penetrans).